A 258-amino-acid polypeptide reads, in one-letter code: Hydroxyacylglutathione hydrolase (258 aa).

The Zn(2+) site is built by histidine 56, histidine 58, aspartate 60, histidine 61, histidine 112, aspartate 132, and histidine 170.

This sequence belongs to the metallo-beta-lactamase superfamily. Glyoxalase II family. As to quaternary structure, monomer. Zn(2+) serves as cofactor.

The enzyme catalyses an S-(2-hydroxyacyl)glutathione + H2O = a 2-hydroxy carboxylate + glutathione + H(+). The protein operates within secondary metabolite metabolism; methylglyoxal degradation; (R)-lactate from methylglyoxal: step 2/2. Its function is as follows. Thiolesterase that catalyzes the hydrolysis of S-D-lactoyl-glutathione to form glutathione and D-lactic acid. The chain is Hydroxyacylglutathione hydrolase from Pseudomonas aeruginosa (strain ATCC 15692 / DSM 22644 / CIP 104116 / JCM 14847 / LMG 12228 / 1C / PRS 101 / PAO1).